The chain runs to 123 residues: WAP four-disulfide core domain protein 5 (123 aa).

Positions methionine 1–glycine 24 are cleaved as a signal peptide. 2 consecutive WAP domains span residues lysine 27 to arginine 73 and valine 74 to alanine 121. 8 disulfide bridges follow: cysteine 34-cysteine 62, cysteine 41-cysteine 66, cysteine 49-cysteine 61, cysteine 55-cysteine 70, cysteine 81-cysteine 109, cysteine 88-cysteine 113, cysteine 96-cysteine 108, and cysteine 102-cysteine 117.

The protein resides in the secreted. Putative acid-stable proteinase inhibitor. In Macaca mulatta (Rhesus macaque), this protein is WAP four-disulfide core domain protein 5 (WFDC5).